Reading from the N-terminus, the 140-residue chain is MGMVSEFKQFAIRGNVIDLAVGVVIGAAFGKIVTALVEKIIMPPIGWAIGNVDFSRLAWVLKPAGVDATGKDIPAVAIGYGDFINTVVQFVIIAFAIFLLVKLINRVTNRKPDAPKGPSEEVLLLREIRDSLKNDTLKSG.

The next 2 helical transmembrane spans lie at 16-36 (VIDL…VTAL) and 84-104 (INTV…VKLI).

This sequence belongs to the MscL family. In terms of assembly, homopentamer.

It is found in the cell inner membrane. Its function is as follows. Channel that opens in response to stretch forces in the membrane lipid bilayer. May participate in the regulation of osmotic pressure changes within the cell. This chain is Large-conductance mechanosensitive channel, found in Xanthomonas oryzae pv. oryzae (strain PXO99A).